A 272-amino-acid polypeptide reads, in one-letter code: Inositol monophosphatase (272 aa).

Residues E71, D90, I92, and D93 each coordinate Mg(2+). E71 is a binding site for substrate. Substrate is bound by residues 92 to 95, 194 to 196, E213, and D220; these read IDGT and GTA. D220 lines the Mg(2+) pocket.

Belongs to the inositol monophosphatase superfamily. It depends on Mg(2+) as a cofactor.

The protein resides in the cytoplasm. The catalysed reaction is a myo-inositol phosphate + H2O = myo-inositol + phosphate. It catalyses the reaction alpha-D-galactose 1-phosphate + H2O = D-galactose + phosphate. The protein operates within polyol metabolism; myo-inositol biosynthesis; myo-inositol from D-glucose 6-phosphate: step 2/2. Its activity is regulated as follows. Inhibited by Li(+), Ca(2+) and Mn(2+), but also by Mg(2+) at concentrations above 3 mM. Responsible for the provision of inositol required for synthesis of phosphatidylinositol and polyphosphoinositides. Has broad substrate specificity and can use myo-inositol monophosphates, myo-inositol 1,3-diphosphate, myo-inositol 1,4-diphosphate, scyllo-inositol-phosphate, D-galactose 1-phosphate, glucose-1-phosphate, glucose-6-phosphate, fructose-1-phosphate, beta-glycerophosphate, and 2'-AMP as substrates. This Dictyostelium discoideum (Social amoeba) protein is Inositol monophosphatase (impa1).